The chain runs to 715 residues: 1,4-alpha-glucan branching enzyme GlgB (715 aa).

Residue aspartate 399 is the Nucleophile of the active site. The active-site Proton donor is glutamate 452.

The protein belongs to the glycosyl hydrolase 13 family. GlgB subfamily. In terms of assembly, monomer.

The enzyme catalyses Transfers a segment of a (1-&gt;4)-alpha-D-glucan chain to a primary hydroxy group in a similar glucan chain.. It participates in glycan biosynthesis; glycogen biosynthesis. Catalyzes the formation of the alpha-1,6-glucosidic linkages in glycogen by scission of a 1,4-alpha-linked oligosaccharide from growing alpha-1,4-glucan chains and the subsequent attachment of the oligosaccharide to the alpha-1,6 position. The polypeptide is 1,4-alpha-glucan branching enzyme GlgB (Rhodopseudomonas palustris (strain BisA53)).